The chain runs to 448 residues: Phosphoglucosamine mutase (448 aa).

Residue Ser-100 is the Phosphoserine intermediate of the active site. Positions 100, 240, 242, and 244 each coordinate Mg(2+). Ser-100 is subject to Phosphoserine.

The protein belongs to the phosphohexose mutase family. Requires Mg(2+) as cofactor. Post-translationally, activated by phosphorylation.

The catalysed reaction is alpha-D-glucosamine 1-phosphate = D-glucosamine 6-phosphate. In terms of biological role, catalyzes the conversion of glucosamine-6-phosphate to glucosamine-1-phosphate. The chain is Phosphoglucosamine mutase from Bacillus cereus (strain B4264).